Consider the following 302-residue polypeptide: Homoserine O-acetyltransferase 1 (302 aa).

Cys142 serves as the catalytic Acyl-thioester intermediate. 2 residues coordinate substrate: Lys163 and Ser192. The Proton acceptor role is filled by His235. Glu237 is a catalytic residue. Arg249 contributes to the substrate binding site.

The protein belongs to the MetA family.

The protein resides in the cytoplasm. The enzyme catalyses L-homoserine + acetyl-CoA = O-acetyl-L-homoserine + CoA. It functions in the pathway amino-acid biosynthesis; L-methionine biosynthesis via de novo pathway; O-acetyl-L-homoserine from L-homoserine: step 1/1. Functionally, transfers an acetyl group from acetyl-CoA to L-homoserine, forming acetyl-L-homoserine. The chain is Homoserine O-acetyltransferase 1 from Ilyobacter polytropus (strain ATCC 51220 / DSM 2926 / LMG 16218 / CuHBu1).